Here is a 207-residue protein sequence, read N- to C-terminus: Histidine biosynthesis bifunctional protein HisIE (207 aa).

Positions 1–117 (MSLVTTINWE…GKQEQPALVF (117 aa)) are phosphoribosyl-AMP cyclohydrolase. A phosphoribosyl-ATP pyrophosphohydrolase region spans residues 118-207 (LHQLEQVLAN…TEKLQERHNK (90 aa)).

In the N-terminal section; belongs to the PRA-CH family. This sequence in the C-terminal section; belongs to the PRA-PH family.

The protein localises to the cytoplasm. It catalyses the reaction 1-(5-phospho-beta-D-ribosyl)-ATP + H2O = 1-(5-phospho-beta-D-ribosyl)-5'-AMP + diphosphate + H(+). The enzyme catalyses 1-(5-phospho-beta-D-ribosyl)-5'-AMP + H2O = 1-(5-phospho-beta-D-ribosyl)-5-[(5-phospho-beta-D-ribosylamino)methylideneamino]imidazole-4-carboxamide. It participates in amino-acid biosynthesis; L-histidine biosynthesis; L-histidine from 5-phospho-alpha-D-ribose 1-diphosphate: step 2/9. Its pathway is amino-acid biosynthesis; L-histidine biosynthesis; L-histidine from 5-phospho-alpha-D-ribose 1-diphosphate: step 3/9. This Photobacterium profundum (strain SS9) protein is Histidine biosynthesis bifunctional protein HisIE.